The primary structure comprises 227 residues: Cytochrome c oxidase subunit 2 (227 aa).

At methionine 1–serine 14 the chain is on the mitochondrial intermembrane side. Residues proline 15–methionine 45 form a helical membrane-spanning segment. At leucine 46–glutamine 59 the chain is on the mitochondrial matrix side. The chain crosses the membrane as a helical span at residues glutamate 60–methionine 87. Residues aspartate 88–leucine 227 are Mitochondrial intermembrane-facing. Residues histidine 161, cysteine 196, glutamate 198, cysteine 200, histidine 204, and methionine 207 each coordinate Cu cation. Glutamate 198 is a binding site for Mg(2+). Tyrosine 218 bears the Phosphotyrosine mark.

Belongs to the cytochrome c oxidase subunit 2 family. In terms of assembly, component of the cytochrome c oxidase (complex IV, CIV), a multisubunit enzyme composed of 14 subunits. The complex is composed of a catalytic core of 3 subunits MT-CO1, MT-CO2 and MT-CO3, encoded in the mitochondrial DNA, and 11 supernumerary subunits COX4I, COX5A, COX5B, COX6A, COX6B, COX6C, COX7A, COX7B, COX7C, COX8 and NDUFA4, which are encoded in the nuclear genome. The complex exists as a monomer or a dimer and forms supercomplexes (SCs) in the inner mitochondrial membrane with NADH-ubiquinone oxidoreductase (complex I, CI) and ubiquinol-cytochrome c oxidoreductase (cytochrome b-c1 complex, complex III, CIII), resulting in different assemblies (supercomplex SCI(1)III(2)IV(1) and megacomplex MCI(2)III(2)IV(2)). Found in a complex with TMEM177, COA6, COX18, COX20, SCO1 and SCO2. Interacts with TMEM177 in a COX20-dependent manner. Interacts with COX20. Interacts with COX16. Cu cation is required as a cofactor.

It is found in the mitochondrion inner membrane. The enzyme catalyses 4 Fe(II)-[cytochrome c] + O2 + 8 H(+)(in) = 4 Fe(III)-[cytochrome c] + 2 H2O + 4 H(+)(out). In terms of biological role, component of the cytochrome c oxidase, the last enzyme in the mitochondrial electron transport chain which drives oxidative phosphorylation. The respiratory chain contains 3 multisubunit complexes succinate dehydrogenase (complex II, CII), ubiquinol-cytochrome c oxidoreductase (cytochrome b-c1 complex, complex III, CIII) and cytochrome c oxidase (complex IV, CIV), that cooperate to transfer electrons derived from NADH and succinate to molecular oxygen, creating an electrochemical gradient over the inner membrane that drives transmembrane transport and the ATP synthase. Cytochrome c oxidase is the component of the respiratory chain that catalyzes the reduction of oxygen to water. Electrons originating from reduced cytochrome c in the intermembrane space (IMS) are transferred via the dinuclear copper A center (CU(A)) of subunit 2 and heme A of subunit 1 to the active site in subunit 1, a binuclear center (BNC) formed by heme A3 and copper B (CU(B)). The BNC reduces molecular oxygen to 2 water molecules using 4 electrons from cytochrome c in the IMS and 4 protons from the mitochondrial matrix. In Nycticebus coucang (Slow loris), this protein is Cytochrome c oxidase subunit 2 (MT-CO2).